Reading from the N-terminus, the 163-residue chain is Cytochrome b6-f complex subunit 4 (163 aa).

The next 3 membrane-spanning stretches (helical) occupy residues Leu36–Val56, Leu95–Glu115, and Thr131–Ile151.

It belongs to the cytochrome b family. PetD subfamily. As to quaternary structure, the 4 large subunits of the cytochrome b6-f complex are cytochrome b6, subunit IV (17 kDa polypeptide, petD), cytochrome f and the Rieske protein, while the 4 small subunits are petG, petL, petM and petN. The complex functions as a dimer.

It localises to the plastid. It is found in the chloroplast thylakoid membrane. Component of the cytochrome b6-f complex, which mediates electron transfer between photosystem II (PSII) and photosystem I (PSI), cyclic electron flow around PSI, and state transitions. The protein is Cytochrome b6-f complex subunit 4 of Drimys granadensis.